The chain runs to 242 residues: Neuromodulin (242 aa).

The interval Met-1 to Ala-242 is disordered. 2 S-palmitoyl cysteine lipidation sites follow: Cys-3 and Cys-4. The segment covering Lys-9–His-32 has biased composition (basic and acidic residues). Residues Ala-31–Gln-60 enclose the IQ domain. Ser-41 carries the phosphoserine; by PHK and PKC modification. 2 stretches are compositionally biased toward basic and acidic residues: residues Gly-66 to Glu-84 and Lys-98 to Gly-117. Positions Glu-142–Ser-157 are enriched in polar residues. A phosphoserine mark is found at Ser-154, Ser-156, and Ser-157. Positions Lys-158–Gln-170 are enriched in basic and acidic residues. Low complexity predominate over residues Ala-171–Ala-203. Thr-185 bears the Phosphothreonine mark. Ser-206 and Ser-207 each carry phosphoserine; by CK2. Residues Ala-209 to Ala-242 are compositionally biased toward basic and acidic residues.

Belongs to the neuromodulin family. Identified in a complex containing FGFR4, NCAM1, CDH2, PLCG1, FRS2, SRC, SHC1, GAP43 and CTTN. Interacts (via IQ domain) with calmodulin. Binds calmodulin with a greater affinity in the absence of Ca(2+) than in its presence. In terms of processing, phosphorylated. Phosphorylation of this protein by a protein kinase C is specifically correlated with certain forms of synaptic plasticity. Palmitoylated by ZDHHC3. Palmitoylation is regulated by ARF6 and is essential for plasma membrane association and axonal and dendritic filopodia induction. Deacylated by LYPLA2.

The protein localises to the cell membrane. Its subcellular location is the cell projection. It is found in the growth cone membrane. The protein resides in the synapse. It localises to the filopodium membrane. The protein localises to the perikaryon. Its subcellular location is the dendrite. It is found in the axon. The protein resides in the cytoplasm. Its function is as follows. This protein is associated with nerve growth. It is a major component of the motile 'growth cones' that form the tips of elongating axons. Plays a role in axonal and dendritic filopodia induction. The polypeptide is Neuromodulin (GAP43) (Felis catus (Cat)).